A 138-amino-acid chain; its full sequence is Small ribosomal subunit protein uS11c (138 aa).

Residues Met1–Ala22 are disordered. Positions Ser9 to Ala22 are enriched in basic residues.

This sequence belongs to the universal ribosomal protein uS11 family. Part of the 30S ribosomal subunit.

The protein resides in the plastid. It localises to the chloroplast. This chain is Small ribosomal subunit protein uS11c, found in Solanum bulbocastanum (Wild potato).